The following is a 1108-amino-acid chain: Lon protease homolog, mitochondrial (1108 aa).

A mitochondrion-targeting transit peptide spans 1-62; it reads MLRGQSLPWR…RAFSTSSIRR (62 aa). 2 disordered regions span residues 24–192 and 299–318; these read PLLP…QKPS and LPPG…PEKK. Over residues 36–53 the composition is skewed to low complexity; the sequence is RSNLSISRLSRSPSLSPR. Basic and acidic residues-rich tracts occupy residues 78–103 and 119–146; these read EQKD…DSTG and KVAG…KSDP. Over residues 161–171 the composition is skewed to polar residues; sequence SDTKSSASNGG. Composition is skewed to basic and acidic residues over residues 174–188 and 309–318; these read DGGR…DRAL and NTEDKAPEKK. One can recognise a Lon N-terminal domain in the interval 200–452; it reads VMAIPIAKRP…KALVVLKKEL (253 aa). 605–612 is an ATP binding site; sequence GPPGVGKT. Positions 821-855 are enriched in basic and acidic residues; the sequence is DKALTDEGKAAQEESKKETEEGDPKDPPADPEKST. A disordered region spans residues 821-862; sequence DKALTDEGKAAQEESKKETEEGDPKDPPADPEKSTTETPRLA. The Lon proteolytic domain maps to 895-1081; it reads TFPPGVTMGL…SEVFNILFAE (187 aa). Active-site residues include serine 987 and lysine 1030.

This sequence belongs to the peptidase S16 family. As to quaternary structure, homohexamer or homoheptamer. Organized in a ring with a central cavity.

The protein localises to the mitochondrion matrix. It carries out the reaction Hydrolysis of proteins in presence of ATP.. Functionally, ATP-dependent serine protease that mediates the selective degradation of misfolded, unassembled or oxidatively damaged polypeptides as well as certain short-lived regulatory proteins in the mitochondrial matrix. May also have a chaperone function in the assembly of inner membrane protein complexes. Participates in the regulation of mitochondrial gene expression and in the maintenance of the integrity of the mitochondrial genome. Binds to mitochondrial DNA in a site-specific manner. This chain is Lon protease homolog, mitochondrial (pim1), found in Aspergillus fumigatus (strain ATCC MYA-4609 / CBS 101355 / FGSC A1100 / Af293) (Neosartorya fumigata).